We begin with the raw amino-acid sequence, 620 residues long: Siderophore iron transporter ARN2 (620 aa).

A disordered region spans residues M1–K42. Residues K16–K42 show a composition bias toward basic and acidic residues. The next 14 membrane-spanning stretches (helical) occupy residues I71–Y93, L106–L128, L135–Q152, A162–S184, W191–V213, W223–M245, V286–G308, I318–W335, V355–Y377, T392–T414, S421–Y438, G448–V470, V491–P513, and V561–V578.

This sequence belongs to the major facilitator superfamily.

The protein resides in the endosome membrane. Functionally, involved in the transport of siderophore triacestylfusarinine C and so has a role in iron homeostasis. The protein is Siderophore iron transporter ARN2 (ARN2) of Saccharomyces cerevisiae (strain ATCC 204508 / S288c) (Baker's yeast).